The chain runs to 553 residues: ATP synthase F(1) complex subunit alpha, mitochondrial (553 aa).

Residues 1 to 43 (MLSVRVAAAVVRALPRRAGLVSRNALGSSFIAARNFHASNTHL) constitute a mitochondrion transit peptide. Residues Ser53 and Ser65 each carry the phosphoserine modification. Ser76 is subject to Phosphoserine; alternate. Ser76 is a glycosylation site (O-linked (GlcNAc) serine; alternate). At Ser106 the chain carries Phosphoserine. N6-acetyllysine is present on residues Lys123, Lys126, and Lys132. Residue Thr134 is modified to Phosphothreonine. Position 161 is an N6-acetyllysine; alternate (Lys161). N6-succinyllysine; alternate is present on Lys161. Position 166 is a phosphoserine (Ser166). At Lys167 the chain carries N6-acetyllysine; alternate. Residue Lys167 is modified to N6-succinyllysine; alternate. At Ser184 the chain carries Phosphoserine. Arg204 is modified (omega-N-methylarginine). ATP contacts are provided by Gln215, Gly217, Lys218, Thr219, and Ser220. Thr219 contributes to the Mg(2+) binding site. 2 positions are modified to N6-acetyllysine; alternate: Lys230 and Lys239. Residues Lys230 and Lys239 each carry the N6-succinyllysine; alternate modification. Lys240 bears the N6-acetyllysine mark. N6-acetyllysine; alternate is present on residues Lys261 and Lys305. Lys261 and Lys305 each carry N6-succinyllysine; alternate. Asp312 is a Mg(2+) binding site. Lys427 is subject to N6-acetyllysine; alternate. Lys427 carries the post-translational modification N6-succinyllysine; alternate. An N6-acetyllysine modification is found at Lys434. ATP is bound by residues Gln473 and Gln475. N6-acetyllysine; alternate is present on residues Lys498, Lys506, Lys531, and Lys539. N6-succinyllysine; alternate is present on residues Lys498, Lys506, Lys531, and Lys539. Lys541 is modified (N6-acetyllysine).

The protein belongs to the ATPase alpha/beta chains family. As to quaternary structure, homotrimer. Component of the ATP synthase complex composed at least of ATP5F1A/subunit alpha, ATP5F1B/subunit beta, ATP5MC1/subunit c (homooctomer), MT-ATP6/subunit a, MT-ATP8/subunit 8, ATP5ME/subunit e, ATP5MF/subunit f, ATP5MG/subunit g, ATP5MK/subunit k, ATP5MJ/subunit j, ATP5F1C/subunit gamma, ATP5F1D/subunit delta, ATP5F1E/subunit epsilon, ATP5PF/subunit F6, ATP5PB/subunit b, ATP5PD/subunit d, ATP5PO/subunit OSCP. ATP synthase complex consists of a soluble F(1) head domain (subunits alpha(3) and beta(3)) - the catalytic core - and a membrane F(0) domain - the membrane proton channel (subunits c, a, 8, e, f, g, k and j). These two domains are linked by a central stalk (subunits gamma, delta, and epsilon) rotating inside the F1 region and a stationary peripheral stalk (subunits F6, b, d, and OSCP). Interacts with ATPAF2. Interacts with HRG; the interaction occurs on the surface of T-cells and alters the cell morphology when associated with concanavalin (in vitro). Interacts with PLG (angiostatin peptide); the interaction inhibits most of the angiogenic properties of angiostatin. Interacts with BLOC1S1. Interacts with BCL2L1 isoform BCL-X(L); the interaction mediates the association of BCL2L1 isoform BCL-X(L) with the mitochondrial membrane F(1)F(0) ATP synthase and enhances neurons metabolic efficiency. Interacts with CLN5 and PPT1. Interacts with S100A1; this interaction increases F1-ATPase activity. Interacts with ABCB7; this interaction allows the regulation of cellular iron homeostasis and cellular reactive oxygen species (ROS) levels in cardiomyocytes. Acetylated on lysine residues. BLOC1S1 is required for acetylation.

It is found in the mitochondrion inner membrane. The protein resides in the cell membrane. In terms of biological role, subunit alpha, of the mitochondrial membrane ATP synthase complex (F(1)F(0) ATP synthase or Complex V) that produces ATP from ADP in the presence of a proton gradient across the membrane which is generated by electron transport complexes of the respiratory chain. ATP synthase complex consist of a soluble F(1) head domain - the catalytic core - and a membrane F(1) domain - the membrane proton channel. These two domains are linked by a central stalk rotating inside the F(1) region and a stationary peripheral stalk. During catalysis, ATP synthesis in the catalytic domain of F(1) is coupled via a rotary mechanism of the central stalk subunits to proton translocation. In vivo, can only synthesize ATP although its ATP hydrolase activity can be activated artificially in vitro. With the catalytic subunit beta (ATP5F1B), forms the catalytic core in the F(1) domain. Subunit alpha does not bear the catalytic high-affinity ATP-binding sites. This Pongo abelii (Sumatran orangutan) protein is ATP synthase F(1) complex subunit alpha, mitochondrial.